The primary structure comprises 549 residues: MTVKSIKRAYQVIRTTLHYGLDDLIPSKVTPWYFKLLRGSLFWLRNKHKDKVGGERLKLAMQELGPVYIKFGQMLSTRRDLLSDEWAEELAMLQDRVPPFDSAIARESIEQELNAPIETYFDDFEDTPLASASISQVHTATLKSNGAKVVLKVLRPDVEQKVHADIQLMSQAANFLESLLGANNRLRPAEVVEDYRTTIEGELNLKLEALNAIKLRNNFLDSNALYIPYMYEELCFTRLIVMERIDGVPVSDKAALEAQGTNLKLLAERGVELFFTQVFRDNFFHADMHPGNIFVSREHPNDPFYIGLDCGIMGTLTDEDKRYLAENFLAFFNRDYRRIAQLYIESGWVSADTDISAFEQAVKVVCEPMFNKPLDEISFGHVLLELFRTARRFDMVVQPQLVLLEKTLLYIEGLGRQLYPQLDLWQTAKPFLEDWMAEQVGPKAMAGKIKQQLPYWADQLPELPELIYDNLKMGRNLAKTHNKLLDRYLKHQQKAHKSNYLLITSAILVICGTILLNQDATLWASYGSIGTGLILWVLGWRSRPKNRKF.

Residues 123–501 (DFEDTPLASA…QQKAHKSNYL (379 aa)) enclose the Protein kinase domain. Residues 129-137 (LASASISQV) and lysine 152 each bind ATP. Aspartate 287 acts as the Proton acceptor in catalysis. Transmembrane regions (helical) follow at residues 498–518 (SNYLLITSAILVICGTILLNQ) and 520–540 (ATLWASYGSIGTGLILWVLGW).

Belongs to the ABC1 family. UbiB subfamily.

Its subcellular location is the cell inner membrane. It functions in the pathway cofactor biosynthesis; ubiquinone biosynthesis [regulation]. Functionally, is probably a protein kinase regulator of UbiI activity which is involved in aerobic coenzyme Q (ubiquinone) biosynthesis. The chain is Probable protein kinase UbiB from Shewanella piezotolerans (strain WP3 / JCM 13877).